Here is a 735-residue protein sequence, read N- to C-terminus: Putative RNA polymerase II subunit B1 CTD phosphatase RPAP2 homolog (735 aa).

Residues 33 to 118 (AARKLMSRSD…LQEARTLEFD (86 aa)) form an RTR1-type zinc finger. Residues C56, C61, C94, and C98 each coordinate Zn(2+). Disordered stretches follow at residues 179 to 201 (VPFDRSKSSNDSKATTQSNQEKH), 349 to 374 (GKNTLSGSSSGSNTKGSKTKPEKSRK), and 519 to 538 (EHSEEEMTEEEPTLLKWPNK). The segment covering 349–364 (GKNTLSGSSSGSNTKG) has biased composition (low complexity). Residues 519-530 (EHSEEEMTEEEP) show a composition bias toward acidic residues.

The protein belongs to the RPAP2 family.

The protein localises to the nucleus. It carries out the reaction O-phospho-L-seryl-[protein] + H2O = L-seryl-[protein] + phosphate. The catalysed reaction is O-phospho-L-threonyl-[protein] + H2O = L-threonyl-[protein] + phosphate. Its function is as follows. Putative RNA polymerase II subunit B1 C-terminal domain (CTD) phosphatase involved in RNA polymerase II transcription regulation. The sequence is that of Putative RNA polymerase II subunit B1 CTD phosphatase RPAP2 homolog from Arabidopsis thaliana (Mouse-ear cress).